We begin with the raw amino-acid sequence, 117 residues long: Glutamine-rich protein (117 aa).

Residues arginine 27 to glycine 72 show a composition bias toward low complexity. The segment at arginine 27 to asparagine 88 is disordered. Polar residues predominate over residues arginine 75–glutamine 87.

In terms of tissue distribution, component of the acid-soluble and acid-insoluble organic matrix of calcified shell layers (at protein level).

It localises to the secreted. The polypeptide is Glutamine-rich protein (Haliotis asinina (Donkey's ear abalone)).